Reading from the N-terminus, the 212-residue chain is Small ribosomal subunit protein eS1 (212 aa).

This sequence belongs to the eukaryotic ribosomal protein eS1 family.

The sequence is that of Small ribosomal subunit protein eS1 from Haloquadratum walsbyi (strain DSM 16790 / HBSQ001).